The sequence spans 624 residues: Ceramide transfer protein (624 aa).

Residues M1–G11 are compositionally biased toward polar residues. The interval M1–V24 is disordered. Residues P23 to T117 enclose the PH domain. S126 is subject to Phosphoserine. A Phosphoserine; by PKD modification is found at S132. S135 is modified (phosphoserine). The stretch at I263 to H303 forms a coiled coil. S315 carries the phosphoserine modification. The FFAT motif lies at E321–E327. Y372 carries the post-translational modification Phosphotyrosine. Phosphoserine is present on residues S373, S377, and S380. An START domain is found at D389–A618. 4 residues coordinate an N-acylsphing-4-enine: E472, Q493, N530, and Y579.

Interacts with VAPA and VAPB. Interaction with VAPB is less efficient than with VAPA. Interacts (via FFAT motif) with the MOSPD2 (via MSP domain). Post-translationally, phosphorylation on Ser-132 decreases the affinity toward phosphatidylinositol 4-phosphate at Golgi membranes and reduces ceramide transfer activity. Inactivated by hyperphosphorylation of serine residues by CSNK1G2/CK1 that triggers dissociation from the Golgi complex, thus down-regulating ER-to-Golgi transport of ceramide and sphingomyelin synthesis.

It localises to the cytoplasm. Its subcellular location is the golgi apparatus. The protein localises to the endoplasmic reticulum. The enzyme catalyses N-hexadecanoylsphing-4-enine(in) = N-hexadecanoylsphing-4-enine(out). Shelters ceramides and diacylglycerol lipids inside its START domain and mediates the intracellular trafficking of ceramides and diacylglycerol lipids in a non-vesicular manner. The sequence is that of Ceramide transfer protein (CERT1) from Pongo abelii (Sumatran orangutan).